We begin with the raw amino-acid sequence, 177 residues long: uncharacterized protein (177 aa).

The protein resides in the plastid. It is found in the chloroplast. This is an uncharacterized protein from Chlorella vulgaris (Green alga).